Reading from the N-terminus, the 918-residue chain is Whirlin (918 aa).

A PDZ 1 domain is found at 141–224 (LVSLRRAKAH…LVLSVYSAGR (84 aa)). Positions 240 to 266 (PQGRSTSPPSSLPQPHGSTLRQREDDR) are disordered. Positions 280-362 (KVNLVLGDGR…LILTVKDVGR (83 aa)) constitute a PDZ 2 domain. Disordered stretches follow at residues 387-407 (NSAG…GFYK), 503-538 (SMKA…TSTT), and 560-824 (EGTG…LEPT). Low complexity predominate over residues 522–538 (SYSDTGSSTGSHGTSTT). A compositionally biased stretch (polar residues) spans 563 to 572 (GETTQGSTNA). Composition is skewed to pro residues over residues 591-600 (IKPPPPPPPL) and 638-649 (RSPPPGTAPTPG). A compositionally biased stretch (polar residues) spans 654 to 672 (QDSPSSPIYASISHANPSS). Ser696 carries the post-translational modification Phosphoserine. 2 stretches are compositionally biased toward polar residues: residues 754-773 (QTRT…TLSE) and 783-798 (EAST…SAKN). Residues 800–811 (NGKEQPRTERTA) show a composition bias toward basic and acidic residues. The PDZ 3 domain maps to 827–910 (LVRVRKSAAT…TKERDYIDFL (84 aa)).

Forms homooligomers. Interacts (via C-terminal PDZ domain) with MYO15A; this interaction is necessary for localization of WHRN to stereocilia tips. Interacts (via C-terminal PDZ domain) with MPP1/p55. Interacts with LRRC4C/NGL1. Interacts with MYO7A. Interacts with RPGR. Interacts with EPS8. Interacts with CASK. Interacts with CIB2. Component of USH2 complex, composed of ADGRV1, PDZD7, USH2A and WHRN. Interacts (via PDZ domains) with PDZD7; the interaction is direct. Interacts (via N-terminal PDZ domain) with USH2A (via cytoplasmic region). Interacts with ADGRV1/MASS1 (via cytoplasmic region). In terms of tissue distribution, expressed in the retina. Colocalizes with RPGR in the photoreceptor connecting cilium, a thin bridge linking the cell body and the light-sensing outer segment (at protein level). Detected in the inner ear throughout development from embryonic day 12 to 20 days after birth. Displays a dynamic pattern of expression after birth, demonstrating an ordered appearance and fade-out across stereocilia rows. Isoforms 5, 6, 7 and 8 are not detected in the retina.

Its subcellular location is the cytoplasm. It is found in the cell projection. It localises to the stereocilium. The protein resides in the growth cone. The protein localises to the photoreceptor inner segment. Its subcellular location is the synapse. Its function is as follows. Involved in hearing and vision as member of the USH2 complex. Necessary for elongation and maintenance of inner and outer hair cell stereocilia in the organ of Corti in the inner ear. Involved in the maintenance of the hair bundle ankle region, which connects stereocilia in cochlear hair cells of the inner ear. In retina photoreceptors, required for the maintenance of periciliary membrane complex that seems to play a role in regulating intracellular protein transport. The polypeptide is Whirlin (Mus musculus (Mouse)).